The sequence spans 116 residues: Ig heavy chain V-A1 region BS-5 (116 aa).

Gln-1 bears the Pyrrolidone carboxylic acid mark. The 107-residue stretch at 1–107 (QSVEESGGRL…LVHLAFVDVW (107 aa)) folds into the Ig-like domain.

The sequence is that of Ig heavy chain V-A1 region BS-5 from Oryctolagus cuniculus (Rabbit).